A 375-amino-acid chain; its full sequence is DNA replication and repair protein RecF (375 aa).

30–37 (GNNAQGKS) contributes to the ATP binding site.

It belongs to the RecF family.

The protein localises to the cytoplasm. In terms of biological role, the RecF protein is involved in DNA metabolism; it is required for DNA replication and normal SOS inducibility. RecF binds preferentially to single-stranded, linear DNA. It also seems to bind ATP. The protein is DNA replication and repair protein RecF of Microcystis aeruginosa (strain NIES-843 / IAM M-2473).